Reading from the N-terminus, the 321-residue chain is Transaldolase (321 aa).

Lys-132 serves as the catalytic Schiff-base intermediate with substrate.

This sequence belongs to the transaldolase family. Type 1 subfamily. Homodimer.

The protein resides in the cytoplasm. It catalyses the reaction D-sedoheptulose 7-phosphate + D-glyceraldehyde 3-phosphate = D-erythrose 4-phosphate + beta-D-fructose 6-phosphate. The protein operates within carbohydrate degradation; pentose phosphate pathway; D-glyceraldehyde 3-phosphate and beta-D-fructose 6-phosphate from D-ribose 5-phosphate and D-xylulose 5-phosphate (non-oxidative stage): step 2/3. Transaldolase is important for the balance of metabolites in the pentose-phosphate pathway. The chain is Transaldolase from Rhizobium leguminosarum bv. trifolii (strain WSM2304).